Reading from the N-terminus, the 470-residue chain is MVVGDFAIETETLVVGAGPGGYVAAIRAAQLGQKVTIVEKGNLGGVCLNVGCIPSKALISASHRYEQAKHSEEMGIKAENVTIDFAKVQEWKASVVKKLTGGVEGLLKGNKVEIVKGEAYFVDANTVRVVNGDSAQTYTFKNAIIATGSRPIELPNFKFSNRILDSTGALNLGEVPKSLVVIGGGYIGIELGTAYANFGTKVTILEGAGEILSGFEKQMAAIIKKRLKKKGVEVVTNALAKGAEEREDGVTVTYEANGETKTIDADYVLVTVGRRPNTDELGLEQIGIKMTNRGLIEVDQQCRTSVPNIFAIGDIVPGPALAHKASYEGKVAAEAIAGHPSAVDYVAIPAVVFSDPECASVGYFEQQAKDEGIDVIAAKFPFAANGRALALNDTDGFLKLVVRKEDGVIIGAQIIGPNASDMIAELGLAIEAGMTAEDIALTIHAHPTLGEIAMEAAEVALGTPIHIITK.

FAD-binding positions include 39–47 (EKGNLGGVC), Lys-56, and Ala-119. Cysteines 47 and 52 form a disulfide. NAD(+)-binding positions include 183–187 (GGGYI), Glu-206, and 271–274 (TVGR). FAD-binding residues include Asp-314 and Ala-322. His-446 acts as the Proton acceptor in catalysis.

The protein belongs to the class-I pyridine nucleotide-disulfide oxidoreductase family. In terms of assembly, homodimer. Identified in a complex with PdhC. FAD is required as a cofactor.

The protein localises to the cytoplasm. The enzyme catalyses N(6)-[(R)-dihydrolipoyl]-L-lysyl-[protein] + NAD(+) = N(6)-[(R)-lipoyl]-L-lysyl-[protein] + NADH + H(+). Functionally, lipoamide dehydrogenase is a component of the alpha-ketoacid dehydrogenase complexes. The sequence is that of Dihydrolipoyl dehydrogenase (pdhD) from Geobacillus stearothermophilus (Bacillus stearothermophilus).